The chain runs to 217 residues: Large ribosomal subunit protein eL6 (217 aa).

This sequence belongs to the eukaryotic ribosomal protein eL6 family. In terms of assembly, component of the large ribosomal subunit. May bind IPO9 with low affinity.

It localises to the cytoplasm. The protein resides in the cytosol. Its subcellular location is the rough endoplasmic reticulum. In terms of biological role, component of the large ribosomal subunit. This is Large ribosomal subunit protein eL6 (rpl-6) from Caenorhabditis elegans.